Consider the following 206-residue polypeptide: Large ribosomal subunit protein bL9 (206 aa).

The segment at 182 to 206 (FAENQQKALAKEMNDNDANSINEEA) is disordered. Residues 197–206 (NDANSINEEA) show a composition bias toward polar residues.

It belongs to the bacterial ribosomal protein bL9 family.

Its function is as follows. Binds to the 23S rRNA. This Bartonella henselae (strain ATCC 49882 / DSM 28221 / CCUG 30454 / Houston 1) (Rochalimaea henselae) protein is Large ribosomal subunit protein bL9.